The following is a 177-amino-acid chain: Nucleoside triphosphate/diphosphate phosphatase (177 aa).

The active-site Proton donor is the arginine 23. Residues asparagine 87, aspartate 103, aspartate 105, aspartate 107, aspartate 120, and glutamate 123 each coordinate Mg(2+).

The protein belongs to the Ntdp family. The cofactor is Mg(2+).

It carries out the reaction a ribonucleoside 5'-triphosphate + H2O = a ribonucleoside 5'-diphosphate + phosphate + H(+). The enzyme catalyses a ribonucleoside 5'-diphosphate + H2O = a ribonucleoside 5'-phosphate + phosphate + H(+). Functionally, has nucleoside phosphatase activity towards nucleoside triphosphates and nucleoside diphosphates. The protein is Nucleoside triphosphate/diphosphate phosphatase of Streptococcus agalactiae serotype Ia (strain ATCC 27591 / A909 / CDC SS700).